The following is a 149-amino-acid chain: Calmodulin (149 aa).

The residue at position 2 (Ala2) is an N-acetylalanine. EF-hand domains are found at residues 8 to 43 (EQIA…LGQN), 44 to 79 (PTEA…KMKD), 81 to 116 (DSEE…LGEK), and 117 to 149 (LTDE…MTAK). Asp21, Asp23, Asp25, Thr27, Glu32, Asp57, Asp59, Asn61, Thr63, Glu68, Asp94, Asp96, Asn98, Tyr100, and Glu105 together coordinate Ca(2+). Lys116 is subject to N6,N6,N6-trimethyllysine. Ca(2+) contacts are provided by Asp130, Asp132, Asp134, Gln136, and Glu141.

It belongs to the calmodulin family.

Its function is as follows. Calmodulin acts as part of a calcium signal transduction pathway by mediating the control of a large number of enzymes, ion channels, aquaporins and other proteins through calcium-binding. Calcium-binding is required for the activation of calmodulin. Among the enzymes to be stimulated by the calmodulin-calcium complex are a number of protein kinases, such as myosin light-chain kinases and calmodulin-dependent protein kinase type II (CaMK2), and phosphatases. This Oreochromis mossambicus (Mozambique tilapia) protein is Calmodulin (calm).